Here is a 158-residue protein sequence, read N- to C-terminus: Protein BTG2 (158 aa).

At Ser-147 the chain carries Phosphoserine; by MAPK1 and MAPK3. Ser-149 carries the phosphoserine; by MAPK14 modification.

The protein belongs to the BTG family. As to quaternary structure, interacts with PRKCABP. Interacts with CNOT7 and CNOT8; indicative for an association with the CCR4-NOT complex. Interacts with PIN1, inducing mitochondrial depolarization. Phosphorylated at Ser-147 by MAPK1/ERK2 and MAPK3/ERK1, and at Ser-149 by MAPK14, leading to PIN1-binding and mitochondrial depolarization.

Its function is as follows. Anti-proliferative protein; the function is mediated by association with deadenylase subunits of the CCR4-NOT complex. Activates mRNA deadenylation in a CNOT6 and CNOT7-dependent manner. In vitro can inhibit deadenylase activity of CNOT7 and CNOT8. Involved in cell cycle regulation. Could be involved in the growth arrest and differentiation of the neuronal precursors. Modulates transcription regulation mediated by ESR1. Involved in mitochondrial depolarization and neurite outgrowth. The sequence is that of Protein BTG2 (BTG2) from Homo sapiens (Human).